We begin with the raw amino-acid sequence, 461 residues long: Glutamyl-tRNA reductase (461 aa).

Substrate-binding positions include 50–53, serine 111, 116–118, and glutamine 122; these read TCNR and EPQ. Catalysis depends on cysteine 51, which acts as the Nucleophile. 191 to 196 is an NADP(+) binding site; sequence GAGEMA.

This sequence belongs to the glutamyl-tRNA reductase family. As to quaternary structure, homodimer.

It catalyses the reaction (S)-4-amino-5-oxopentanoate + tRNA(Glu) + NADP(+) = L-glutamyl-tRNA(Glu) + NADPH + H(+). The protein operates within porphyrin-containing compound metabolism; protoporphyrin-IX biosynthesis; 5-aminolevulinate from L-glutamyl-tRNA(Glu): step 1/2. Functionally, catalyzes the NADPH-dependent reduction of glutamyl-tRNA(Glu) to glutamate 1-semialdehyde (GSA). This chain is Glutamyl-tRNA reductase, found in Syntrophobacter fumaroxidans (strain DSM 10017 / MPOB).